A 452-amino-acid chain; its full sequence is Tubulin alpha-1 chain (452 aa).

Gln11 is a GTP binding site. An N6-acetyllysine modification is found at Lys40. 6 residues coordinate GTP: Glu71, Gly144, Thr145, Thr179, Asn206, and Asn228. Residue Glu71 coordinates Mg(2+). Residue Glu254 is part of the active site. Residues 430-452 (KDYEEVGAESGDGDDDGLGEEEY) form a disordered region. Residues 431 to 452 (DYEEVGAESGDGDDDGLGEEEY) are compositionally biased toward acidic residues.

The protein belongs to the tubulin family. As to quaternary structure, dimer of alpha and beta chains. A typical microtubule is a hollow water-filled tube with an outer diameter of 25 nm and an inner diameter of 15 nM. Alpha-beta heterodimers associate head-to-tail to form protofilaments running lengthwise along the microtubule wall with the beta-tubulin subunit facing the microtubule plus end conferring a structural polarity. Microtubules usually have 13 protofilaments but different protofilament numbers can be found in some organisms and specialized cells. Requires Mg(2+) as cofactor. Post-translationally, undergoes a tyrosination/detyrosination cycle, the cyclic removal and re-addition of a C-terminal tyrosine residue by the enzymes tubulin tyrosine carboxypeptidase (TTCP) and tubulin tyrosine ligase (TTL), respectively. Acetylation of alpha chains at Lys-40 stabilizes microtubules and affects affinity and processivity of microtubule motors. This modification has a role in multiple cellular functions, ranging from cell motility, cell cycle progression or cell differentiation to intracellular trafficking and signaling.

It localises to the cytoplasm. The protein resides in the cytoskeleton. It carries out the reaction GTP + H2O = GDP + phosphate + H(+). Functionally, tubulin is the major constituent of microtubules, a cylinder consisting of laterally associated linear protofilaments composed of alpha- and beta-tubulin heterodimers. Microtubules grow by the addition of GTP-tubulin dimers to the microtubule end, where a stabilizing cap forms. Below the cap, tubulin dimers are in GDP-bound state, owing to GTPase activity of alpha-tubulin. The polypeptide is Tubulin alpha-1 chain (TUBA1) (Pisum sativum (Garden pea)).